The following is a 38-amino-acid chain: Cytochrome b6-f complex subunit 5 (38 aa).

The helical transmembrane segment at 5–25 threads the bilayer; it reads LLSGIVLGLIPITLAGLFVTA.

This sequence belongs to the PetG family. As to quaternary structure, the 4 large subunits of the cytochrome b6-f complex are cytochrome b6, subunit IV (17 kDa polypeptide, PetD), cytochrome f and the Rieske protein, while the 4 small subunits are PetG, PetL, PetM and PetN. The complex functions as a dimer.

The protein resides in the plastid. It is found in the chloroplast thylakoid membrane. Functionally, component of the cytochrome b6-f complex, which mediates electron transfer between photosystem II (PSII) and photosystem I (PSI), cyclic electron flow around PSI, and state transitions. PetG is required for either the stability or assembly of the cytochrome b6-f complex. The polypeptide is Cytochrome b6-f complex subunit 5 (Adiantum capillus-veneris (Maidenhair fern)).